Consider the following 177-residue polypeptide: MNGGHIQLIIGPMFSGKSTELIRRVRRYQIAQYKCVTIKYSNDNRYGTGLWTHDKNNFEALEATKLCDVLESITDFSVIGIDEGQFFPDIVEFCERMANEGKIVIVAALDGTFQRKPFNNILNLIPLSEMVVKLTAVCMKCFKEASFSKRLGEETEIEIIGGNDMYQSVCRKCYIDS.

An ATP-binding site is contributed by 11 to 18 (GPMFSGKS). Glutamate 83 functions as the Proton acceptor in the catalytic mechanism. Phenylalanine 113 contributes to the substrate binding site. Zn(2+) is bound by residues cysteine 138 and cysteine 141. Substrate is bound at residue 157–161 (IEIIG). Zn(2+) contacts are provided by cysteine 170 and cysteine 173.

This sequence belongs to the thymidine kinase family. In terms of assembly, homotetramer. Two molecules of substrate bind to each enzyme tetramer.

The catalysed reaction is thymidine + ATP = dTMP + ADP + H(+). In terms of biological role, phosphorylates thymidine and thymidine analogs, such as azidothymidine (AZT). Part of the salvage pathway for pyrimidine deoxyribonucleotide synthesis. The sequence is that of Thymidine kinase (OPG101) from Vaccinia virus (strain Copenhagen) (VACV).